The following is a 584-amino-acid chain: 2-succinyl-5-enolpyruvyl-6-hydroxy-3-cyclohexene-1-carboxylate synthase (584 aa).

The protein belongs to the TPP enzyme family. MenD subfamily. Homodimer. The cofactor is Mg(2+). Requires Mn(2+) as cofactor. Thiamine diphosphate is required as a cofactor.

It carries out the reaction isochorismate + 2-oxoglutarate + H(+) = 5-enolpyruvoyl-6-hydroxy-2-succinyl-cyclohex-3-ene-1-carboxylate + CO2. It participates in quinol/quinone metabolism; 1,4-dihydroxy-2-naphthoate biosynthesis; 1,4-dihydroxy-2-naphthoate from chorismate: step 2/7. The protein operates within quinol/quinone metabolism; menaquinone biosynthesis. Catalyzes the thiamine diphosphate-dependent decarboxylation of 2-oxoglutarate and the subsequent addition of the resulting succinic semialdehyde-thiamine pyrophosphate anion to isochorismate to yield 2-succinyl-5-enolpyruvyl-6-hydroxy-3-cyclohexene-1-carboxylate (SEPHCHC). This is 2-succinyl-5-enolpyruvyl-6-hydroxy-3-cyclohexene-1-carboxylate synthase from Bacillus cereus (strain ZK / E33L).